A 208-amino-acid chain; its full sequence is GTP-binding protein YPTM1 (208 aa).

GTP-binding positions include 15-23 (GDSSVGKSC), 33-40 (YVDSYIST), 63-67 (DTAGQ), 121-124 (NKCD), and 151-153 (SAK). The Effector region signature appears at 37-45 (YISTIGVDF). Residues 189–208 (QMKGRPIQQEQQKSSRCCST) are disordered. The span at 196–208 (QQEQQKSSRCCST) shows a compositional bias: polar residues. S-geranylgeranyl cysteine attachment occurs at residues Cys-205 and Cys-206.

This sequence belongs to the small GTPase superfamily. Rab family. Low levels in coleoptiles.

The protein resides in the cell membrane. Protein transport. Probably involved in vesicular traffic. This chain is GTP-binding protein YPTM1 (YPTM1), found in Zea mays (Maize).